The sequence spans 162 residues: 2-C-methyl-D-erythritol 2,4-cyclodiphosphate synthase (162 aa).

The a divalent metal cation site is built by Asp10 and His12. Residues Asp10–His12 and His36–Ser37 each bind 4-CDP-2-C-methyl-D-erythritol 2-phosphate. Residue His44 coordinates a divalent metal cation. 4-CDP-2-C-methyl-D-erythritol 2-phosphate is bound by residues Asp58–Gly60, Phe63–Asp67, and Arg144.

This sequence belongs to the IspF family. Homotrimer. It depends on a divalent metal cation as a cofactor.

It carries out the reaction 4-CDP-2-C-methyl-D-erythritol 2-phosphate = 2-C-methyl-D-erythritol 2,4-cyclic diphosphate + CMP. Its pathway is isoprenoid biosynthesis; isopentenyl diphosphate biosynthesis via DXP pathway; isopentenyl diphosphate from 1-deoxy-D-xylulose 5-phosphate: step 4/6. In terms of biological role, involved in the biosynthesis of isopentenyl diphosphate (IPP) and dimethylallyl diphosphate (DMAPP), two major building blocks of isoprenoid compounds. Catalyzes the conversion of 4-diphosphocytidyl-2-C-methyl-D-erythritol 2-phosphate (CDP-ME2P) to 2-C-methyl-D-erythritol 2,4-cyclodiphosphate (ME-CPP) with a corresponding release of cytidine 5-monophosphate (CMP). The sequence is that of 2-C-methyl-D-erythritol 2,4-cyclodiphosphate synthase from Burkholderia mallei (strain NCTC 10247).